The sequence spans 387 residues: [LysW]-aminoadipate semialdehyde/glutamate semialdehyde transaminase (387 aa).

Residues 96-97 and Phe123 contribute to the pyridoxal 5'-phosphate site; that span reads GT. Arg126 is a substrate binding site. 207–210 contributes to the pyridoxal 5'-phosphate binding site; sequence DEVQ. The residue at position 236 (Lys236) is an N6-(pyridoxal phosphate)lysine. Ser264 is a substrate binding site. Residue Thr265 participates in pyridoxal 5'-phosphate binding.

It belongs to the class-III pyridoxal-phosphate-dependent aminotransferase family. LysJ subfamily. Homodimer. Requires pyridoxal 5'-phosphate as cofactor.

The protein resides in the cytoplasm. It catalyses the reaction [amino-group carrier protein]-C-terminal-gamma-(L-lysyl)-L-glutamate + 2-oxoglutarate = [amino-group carrier protein]-C-terminal-N-(1-carboxy-5-oxopentan-1-yl)-L-glutamine + L-glutamate. The catalysed reaction is [amino-group carrier protein]-C-terminal-gamma-(L-ornithyl)-L-glutamate + 2-oxoglutarate = [amino-group carrier protein]-C-terminal-gamma-(L-glutamyl-5-semialdehyde)-L-glutamate + L-glutamate. Its pathway is amino-acid biosynthesis; L-lysine biosynthesis via AAA pathway; L-lysine from L-alpha-aminoadipate (Thermus route): step 4/5. It participates in amino-acid biosynthesis; L-arginine biosynthesis. Functionally, involved in both the arginine and lysine biosynthetic pathways. This Sulfurisphaera tokodaii (strain DSM 16993 / JCM 10545 / NBRC 100140 / 7) (Sulfolobus tokodaii) protein is [LysW]-aminoadipate semialdehyde/glutamate semialdehyde transaminase.